The sequence spans 312 residues: UPF0725 protein At3g19520 (312 aa).

The protein belongs to the UPF0725 (EMB2204) family.

The sequence is that of UPF0725 protein At3g19520 from Arabidopsis thaliana (Mouse-ear cress).